The primary structure comprises 423 residues: Protein IQ-DOMAIN 16 (423 aa).

2 IQ domains span residues 99 to 127 (RHWAAIIIQTAFRGYLSRRALRALKGIVK) and 128 to 150 (LQALVRGNNVRNQAKLTLRCIKA). Residues 231-251 (QKKLEIAIKREKAQALALSNQ) are a coiled coil. A calmodulin-binding region spans residues 235–252 (EIAIKREKAQALALSNQI).

It belongs to the IQD family. In terms of assembly, binds to multiple calmodulin (CaM) in the presence of Ca(2+) and CaM-like proteins.

Its subcellular location is the cytoplasm. It localises to the cytoskeleton. The protein resides in the cell membrane. May be involved in cooperative interactions with calmodulins or calmodulin-like proteins. Recruits calmodulin proteins to microtubules, thus being a potential scaffold in cellular signaling and trafficking. Regulates cell shape and elongation in aerial organs (i.e. cotyledons, leaves, and hypocotyls) probably by regulating cortical microtubules (MT) arrays orientation. May associate with nucleic acids and regulate gene expression at the transcriptional or post-transcriptional level. The polypeptide is Protein IQ-DOMAIN 16 (Arabidopsis thaliana (Mouse-ear cress)).